The primary structure comprises 336 residues: tRNA N6-adenosine threonylcarbamoyltransferase (336 aa).

2 residues coordinate Fe cation: His111 and His115. Substrate contacts are provided by residues 134–138 (LVSGG), Asp167, Gly180, and Asn270. A Fe cation-binding site is contributed by Asp298.

Belongs to the KAE1 / TsaD family. Requires Fe(2+) as cofactor.

It is found in the cytoplasm. The enzyme catalyses L-threonylcarbamoyladenylate + adenosine(37) in tRNA = N(6)-L-threonylcarbamoyladenosine(37) in tRNA + AMP + H(+). Required for the formation of a threonylcarbamoyl group on adenosine at position 37 (t(6)A37) in tRNAs that read codons beginning with adenine. Is involved in the transfer of the threonylcarbamoyl moiety of threonylcarbamoyl-AMP (TC-AMP) to the N6 group of A37, together with TsaE and TsaB. TsaD likely plays a direct catalytic role in this reaction. The sequence is that of tRNA N6-adenosine threonylcarbamoyltransferase from Acinetobacter baumannii (strain SDF).